Consider the following 621-residue polypeptide: Chaperone protein DnaK (621 aa).

Residue Thr179 is modified to Phosphothreonine; by autocatalysis. Residues 583 to 605 (SQVQDTQGAAQGQSQGNPQQTAD) show a composition bias toward polar residues. Residues 583–621 (SQVQDTQGAAQGQSQGNPQQTADNRGKVVDAEIVDENKE) form a disordered region. The segment covering 606–621 (NRGKVVDAEIVDENKE) has biased composition (basic and acidic residues).

It belongs to the heat shock protein 70 family.

Its function is as follows. Acts as a chaperone. The polypeptide is Chaperone protein DnaK (Endomicrobium trichonymphae).